Reading from the N-terminus, the 347-residue chain is Quinolinate synthase (347 aa).

2 residues coordinate iminosuccinate: His-47 and Ser-68. Cys-113 is a [4Fe-4S] cluster binding site. Iminosuccinate-binding positions include 139–141 and Ser-156; that span reads YAN. [4Fe-4S] cluster is bound at residue Cys-200. Residues 226-228 and Thr-243 each bind iminosuccinate; that span reads HPE. Cys-297 contributes to the [4Fe-4S] cluster binding site.

The protein belongs to the quinolinate synthase family. Type 1 subfamily. [4Fe-4S] cluster serves as cofactor.

The protein resides in the cytoplasm. It catalyses the reaction iminosuccinate + dihydroxyacetone phosphate = quinolinate + phosphate + 2 H2O + H(+). It participates in cofactor biosynthesis; NAD(+) biosynthesis; quinolinate from iminoaspartate: step 1/1. Its function is as follows. Catalyzes the condensation of iminoaspartate with dihydroxyacetone phosphate to form quinolinate. In Salmonella choleraesuis (strain SC-B67), this protein is Quinolinate synthase.